A 340-amino-acid chain; its full sequence is Melanin-concentrating hormone receptor 2 (340 aa).

Over 1-39 (MNPFHASCWNTSAELLNKSWNKEFAYQTASVVDTVILPS) the chain is Extracellular. Residues asparagine 10 and asparagine 17 are each glycosylated (N-linked (GlcNAc...) asparagine). The helical transmembrane segment at 40–60 (MIGIICSTGLVGNILIVFTII) threads the bilayer. Residues 61–69 (RSRKKTVPD) are Cytoplasmic-facing. A helical transmembrane segment spans residues 70 to 90 (IYICNLAVADLVHIVGMPFLI). Over 91-104 (HQWARGGEWVFGGP) the chain is Extracellular. A helical transmembrane segment spans residues 105–129 (LCTIITSLDTCNQFACSAIMTVMSV). Over 130-154 (DRYFALVQPFRLTRWRTRYKTIRIN) the chain is Cytoplasmic. A helical membrane pass occupies residues 155 to 175 (LGLWAASFILALPVWVYSKVI). Residues 176–200 (KFKDGVESCAFDLTSPDDVLWYTLY) lie on the Extracellular side of the membrane. Residues 201-221 (LTITTFFFPLPLILVCYILIL) form a helical membrane-spanning segment. Topologically, residues 222-252 (CYTWEMYQQNKDARCCNPSVPKQRVMKLTKM) are cytoplasmic. The chain crosses the membrane as a helical span at residues 253-273 (VLVLVVVFILSAAPYHVIQLV). Residues 274 to 288 (NLQMEQPTLAFYVGY) lie on the Extracellular side of the membrane. The chain crosses the membrane as a helical span at residues 289–309 (YLSICLSYASSSINPFLYILL). The Cytoplasmic portion of the chain corresponds to 310 to 340 (SGNFQKRLPQIQRRATEKEINNMGNTLKSHF).

The protein belongs to the G-protein coupled receptor 1 family. As to expression, specifically expressed in the brain, with highest levels in cerebral cortex, hippocampus and amygdala. No expression detected in the cerebellum, thalamus or hypothalamus.

The protein resides in the cell membrane. Receptor for melanin-concentrating hormone, coupled to G proteins that activate phosphoinositide hydrolysis. The polypeptide is Melanin-concentrating hormone receptor 2 (MCHR2) (Homo sapiens (Human)).